The chain runs to 156 residues: ATP synthase subunit b (156 aa).

A helical membrane pass occupies residues 11 to 31 (AIAFVLFVIFCMKYVWPPIMA).

Belongs to the ATPase B chain family. In terms of assembly, F-type ATPases have 2 components, F(1) - the catalytic core - and F(0) - the membrane proton channel. F(1) has five subunits: alpha(3), beta(3), gamma(1), delta(1), epsilon(1). F(0) has three main subunits: a(1), b(2) and c(10-14). The alpha and beta chains form an alternating ring which encloses part of the gamma chain. F(1) is attached to F(0) by a central stalk formed by the gamma and epsilon chains, while a peripheral stalk is formed by the delta and b chains.

It is found in the cell inner membrane. Its function is as follows. F(1)F(0) ATP synthase produces ATP from ADP in the presence of a proton or sodium gradient. F-type ATPases consist of two structural domains, F(1) containing the extramembraneous catalytic core and F(0) containing the membrane proton channel, linked together by a central stalk and a peripheral stalk. During catalysis, ATP synthesis in the catalytic domain of F(1) is coupled via a rotary mechanism of the central stalk subunits to proton translocation. In terms of biological role, component of the F(0) channel, it forms part of the peripheral stalk, linking F(1) to F(0). The polypeptide is ATP synthase subunit b (Yersinia pseudotuberculosis serotype O:1b (strain IP 31758)).